The sequence spans 512 residues: Protein OS-9 homolog (512 aa).

Residues 1–17 (MRRFNLILLASLQLVGA) form the signal peptide. A disordered region spans residues 71-91 (QAREADARDNEAENKDQDGPS). Residues 73–88 (READARDNEAENKDQD) show a composition bias toward basic and acidic residues. Asn-118 carries an N-linked (GlcNAc...) asparagine glycan. The MRH domain maps to 149-288 (DSCLYFMSGW…VVNTPRLCND (140 aa)). Cys-151 and Cys-164 are joined by a disulfide. A mannooligosaccharide derivative is bound by residues Trp-158, Trp-159, Gln-171, Asp-242, Arg-248, Glu-270, and Tyr-276. Cystine bridges form between Cys-241/Cys-274 and Cys-256/Cys-286. 2 disordered regions span residues 329–349 (QVPL…PRDV) and 485–512 (AAAK…KDEL). Acidic residues predominate over residues 492–504 (DDEEEVVEGSEEQ). A Prevents secretion from ER motif is present at residues 509–512 (KDEL).

It belongs to the OS-9 family. As to quaternary structure, interacts with missfolded ER lumenal proteins.

It is found in the endoplasmic reticulum membrane. Its function is as follows. Lectin involved in the quality control of the secretory pathway. As a member of the endoplasmic reticulum-associated degradation lumenal (ERAD-L) surveillance system, targets misfolded endoplasmic reticulum lumenal glycoproteins for degradation. The protein is Protein OS-9 homolog (YOS1) of Gibberella zeae (strain ATCC MYA-4620 / CBS 123657 / FGSC 9075 / NRRL 31084 / PH-1) (Wheat head blight fungus).